We begin with the raw amino-acid sequence, 308 residues long: CD276 antigen homolog (308 aa).

Residues 1–15 form the signal peptide; the sequence is MAALCLLLLLSLAEA. At 16-236 the chain is on the extracellular side; that stretch reads IDLRVPELPV…VTGQHLSFPP (221 aa). Residues 21 to 125 form the Ig-like V-type domain; it reads PELPVIGLLD…VQNSSSASVS (105 aa). 2 cysteine pairs are disulfide-bonded: C37-C112 and C155-C210. In terms of domain architecture, Ig-like C2-type spans 135–228; sequence PTLHLEPSEA…DVTHASLTVT (94 aa). A helical membrane pass occupies residues 237–257; it reads LVLWVTVGLSICLLCLLVALA. The Cytoplasmic segment spans residues 258–308; it reads CVCRKHLKQTCEEEQENAGNEEHEENGELKTAMQPLKVTSPGEDDDAECLE. The disordered stretch occupies residues 270–308; the sequence is EEQENAGNEEHEENGELKTAMQPLKVTSPGEDDDAECLE. Acidic residues predominate over residues 299–308; it reads GEDDDAECLE.

The protein belongs to the immunoglobulin superfamily. BTN/MOG family.

The protein resides in the membrane. Modulates immune responses. In Xenopus laevis (African clawed frog), this protein is CD276 antigen homolog (cd276).